The sequence spans 336 residues: Casein kinase II subunit alpha (336 aa).

The Protein kinase domain maps to 37–322 (YQLVRKLGRG…AREAMAHPYF (286 aa)). ATP-binding positions include 43 to 51 (LGRGKYSEV) and Lys66. Asp154 functions as the Proton acceptor in the catalytic mechanism.

Belongs to the protein kinase superfamily. Ser/Thr protein kinase family. CK2 subfamily. As to quaternary structure, tetramer of two alpha and two beta chains. It depends on Mg(2+) as a cofactor.

The protein resides in the nucleus. Its subcellular location is the nucleolus. The enzyme catalyses L-seryl-[protein] + ATP = O-phospho-L-seryl-[protein] + ADP + H(+). The catalysed reaction is L-threonyl-[protein] + ATP = O-phospho-L-threonyl-[protein] + ADP + H(+). Functionally, casein kinases are operationally defined by their preferential utilization of acidic proteins such as caseins as substrates. The alpha chain contains the catalytic site. May participate in Wnt signaling. The chain is Casein kinase II subunit alpha (CkIIalpha) from Drosophila melanogaster (Fruit fly).